A 271-amino-acid polypeptide reads, in one-letter code: Phosphate import ATP-binding protein PstB (271 aa).

Residues 25 to 266 (VDVRQLSLWY…PKHPYTEAYI (242 aa)) form the ABC transporter domain. Residue 57–64 (GPSGCGKS) coordinates ATP.

It belongs to the ABC transporter superfamily. Phosphate importer (TC 3.A.1.7) family. In terms of assembly, the complex is composed of two ATP-binding proteins (PstB), two transmembrane proteins (PstC and PstA) and a solute-binding protein (PstS).

The protein resides in the cell inner membrane. It catalyses the reaction phosphate(out) + ATP + H2O = ADP + 2 phosphate(in) + H(+). Part of the ABC transporter complex PstSACB involved in phosphate import. Responsible for energy coupling to the transport system. The polypeptide is Phosphate import ATP-binding protein PstB (Thermus thermophilus (strain ATCC BAA-163 / DSM 7039 / HB27)).